Reading from the N-terminus, the 78-residue chain is Small ribosomal subunit protein uS17 (78 aa).

It belongs to the universal ribosomal protein uS17 family. Part of the 30S ribosomal subunit.

In terms of biological role, one of the primary rRNA binding proteins, it binds specifically to the 5'-end of 16S ribosomal RNA. This Rhizobium meliloti (strain 1021) (Ensifer meliloti) protein is Small ribosomal subunit protein uS17.